A 392-amino-acid chain; its full sequence is Probable tRNA pseudouridine synthase D 1 (392 aa).

Aspartate 92 serves as the catalytic Nucleophile. Positions 167–354 constitute a TRUD domain; the sequence is YFLNYYGVQR…FIGDRRAMIG (188 aa).

The protein belongs to the pseudouridine synthase TruD family.

The enzyme catalyses uridine(13) in tRNA = pseudouridine(13) in tRNA. In terms of biological role, could be responsible for synthesis of pseudouridine from uracil-13 in transfer RNAs. In Methanocaldococcus jannaschii (strain ATCC 43067 / DSM 2661 / JAL-1 / JCM 10045 / NBRC 100440) (Methanococcus jannaschii), this protein is Probable tRNA pseudouridine synthase D 1.